Here is a 339-residue protein sequence, read N- to C-terminus: Tetraacyldisaccharide 4'-kinase (339 aa).

62 to 69 (VAGGTGKT) lines the ATP pocket.

Belongs to the LpxK family.

It carries out the reaction a lipid A disaccharide + ATP = a lipid IVA + ADP + H(+). It functions in the pathway glycolipid biosynthesis; lipid IV(A) biosynthesis; lipid IV(A) from (3R)-3-hydroxytetradecanoyl-[acyl-carrier-protein] and UDP-N-acetyl-alpha-D-glucosamine: step 6/6. Functionally, transfers the gamma-phosphate of ATP to the 4'-position of a tetraacyldisaccharide 1-phosphate intermediate (termed DS-1-P) to form tetraacyldisaccharide 1,4'-bis-phosphate (lipid IVA). The sequence is that of Tetraacyldisaccharide 4'-kinase from Xylella fastidiosa (strain 9a5c).